The following is a 991-amino-acid chain: Glutamate receptor 1 (991 aa).

The first 27 residues, 1 to 27 (MHSRLKFLAYLHFICASSIFWPEFSSA), serve as a signal peptide directing secretion. Residues 28–611 (QQQQQTVSLT…VFSFLNPLSQ (584 aa)) lie on the Extracellular side of the membrane. Residues N67, N195, N208, and N281 are each glycosylated (N-linked (GlcNAc...) asparagine). 2 disordered regions span residues 300 to 321 (DSRK…GPNS) and 354 to 379 (FRSN…NESS). Residues 308–318 (SGQSQSQNAGG) show a composition bias toward polar residues. The span at 365-379 (GGSSSSSATGTNESS) shows a compositional bias: low complexity. 5 N-linked (GlcNAc...) asparagine glycosylation sites follow: N376, N385, N426, N437, and N477. A helical transmembrane segment spans residues 612 to 632 (EIWISVILSYVGVSFVLYFVT). At 633-710 (RFPPYEWRIV…PSIAGRIAAA (78 aa)) the chain is on the cytoplasmic side. The chain crosses the membrane as a helical span at residues 711 to 731 (VWWFFTIILISSYTANLAAFL). The Extracellular portion of the chain corresponds to 732 to 895 (TVERMVAPIK…STPNELSLSN (164 aa)). A helical transmembrane segment spans residues 896–916 (VAGIYYILIGGLLLAVIVAIM). The Cytoplasmic segment spans residues 917 to 991 (EFFCRNKTPQ…ASNVRYQYSM (75 aa)).

This sequence belongs to the glutamate-gated ion channel (TC 1.A.10.1) family. In terms of assembly, homooligomer. In terms of tissue distribution, central nervous system.

The protein localises to the cell membrane. It localises to the postsynaptic cell membrane. In terms of biological role, receptor for glutamate. L-glutamate acts as an excitatory neurotransmitter at many synapses in the central nervous system. The postsynaptic actions of Glu are mediated by a variety of receptors that are named according to their selective agonists. Forms ligand-gated ion channels which are activated by kainate. The chain is Glutamate receptor 1 (GluRIA) from Drosophila melanogaster (Fruit fly).